Here is a 427-residue protein sequence, read N- to C-terminus: Trigger factor (427 aa).

Positions 163 to 248 (GDIAVIDFKG…IKSIKVKELP (86 aa)) constitute a PPIase FKBP-type domain.

Belongs to the FKBP-type PPIase family. Tig subfamily.

It is found in the cytoplasm. The enzyme catalyses [protein]-peptidylproline (omega=180) = [protein]-peptidylproline (omega=0). Functionally, involved in protein export. Acts as a chaperone by maintaining the newly synthesized protein in an open conformation. Functions as a peptidyl-prolyl cis-trans isomerase. The sequence is that of Trigger factor from Clostridium beijerinckii (strain ATCC 51743 / NCIMB 8052) (Clostridium acetobutylicum).